A 302-amino-acid chain; its full sequence is Glutaminase (302 aa).

Substrate is bound by residues Ser61, Asn111, Glu155, Asn162, Tyr186, Tyr238, and Val256.

This sequence belongs to the glutaminase family. In terms of assembly, homotetramer.

It carries out the reaction L-glutamine + H2O = L-glutamate + NH4(+). The protein is Glutaminase of Ectopseudomonas mendocina (strain ymp) (Pseudomonas mendocina).